Consider the following 356-residue polypeptide: Butyrate kinase (356 aa).

It belongs to the acetokinase family.

It is found in the cytoplasm. The enzyme catalyses butanoate + ATP = butanoyl phosphate + ADP. It participates in lipid metabolism; butanoate metabolism. Catalyzes the conversion of butyryl-CoA through butyryl phosphate to butyrate. The sequence is that of Butyrate kinase (buk) from Clostridium perfringens (strain ATCC 13124 / DSM 756 / JCM 1290 / NCIMB 6125 / NCTC 8237 / Type A).